Reading from the N-terminus, the 520-residue chain is Ribonuclease Y (520 aa).

A helical transmembrane segment spans residues 3-23 (IEIQWIGIGAAFLVGAIGGAL). Positions 210–273 (AVSVVPLPND…EVARLALERL (64 aa)) constitute a KH domain. The 94-residue stretch at 336–429 (VLQHSIEVAF…VQAADALSGA (94 aa)) folds into the HD domain.

The protein belongs to the RNase Y family.

Its subcellular location is the cell membrane. Endoribonuclease that initiates mRNA decay. This chain is Ribonuclease Y, found in Syntrophotalea carbinolica (strain DSM 2380 / NBRC 103641 / GraBd1) (Pelobacter carbinolicus).